A 440-amino-acid polypeptide reads, in one-letter code: Chromosomal replication initiator protein DnaA (440 aa).

Residues 1 to 69 (MKERILQEIK…VKVVLGNDAT (69 aa)) are domain I, interacts with DnaA modulators. Residues 69–96 (TFEITYEAFEPHSSYSEPLVKKRAVLLT) form a domain II region. The segment at 97-313 (PLNPDYTFEN…GAIIKLLVYK (217 aa)) is domain III, AAA+ region. The ATP site is built by G140, G142, K143, and T144. The interval 314–440 (ETTGKEVDLR…GEISKRALSG (127 aa)) is domain IV, binds dsDNA.

Belongs to the DnaA family. In terms of assembly, oligomerizes as a right-handed, spiral filament on DNA at oriC.

It is found in the cytoplasm. In terms of biological role, plays an essential role in the initiation and regulation of chromosomal replication. ATP-DnaA binds to the origin of replication (oriC) to initiate formation of the DNA replication initiation complex once per cell cycle. Binds the DnaA box (a 9 base pair repeat at the origin) and separates the double-stranded (ds)DNA. Forms a right-handed helical filament on oriC DNA; dsDNA binds to the exterior of the filament while single-stranded (ss)DNA is stabiized in the filament's interior. The ATP-DnaA-oriC complex binds and stabilizes one strand of the AT-rich DNA unwinding element (DUE), permitting loading of DNA polymerase. After initiation quickly degrades to an ADP-DnaA complex that is not apt for DNA replication. Binds acidic phospholipids. This Thermotoga petrophila (strain ATCC BAA-488 / DSM 13995 / JCM 10881 / RKU-1) protein is Chromosomal replication initiator protein DnaA.